The chain runs to 737 residues: Polyribonucleotide nucleotidyltransferase (737 aa).

2 residues coordinate Mg(2+): Asp-489 and Asp-495. Positions 556–615 constitute a KH domain; that stretch reads PKIDTIKIDVDKIKIVIGKGGETIDKIIAETGVKIDIDEEGNVSIYSSDQDAINRAKEII. Positions 625–693 constitute an S1 motif domain; that stretch reads DEVYRAKVVR…EKGRIDASMK (69 aa). The tract at residues 691–737 is disordered; it reads SMKALLPRPPKPEHDEKGEKSERPHRPRHHKDHKPKKEFTETPKDSE. The segment covering 700-714 has biased composition (basic and acidic residues); the sequence is PKPEHDEKGEKSERP. Residues 715 to 724 are compositionally biased toward basic residues; that stretch reads HRPRHHKDHK. The span at 725-737 shows a compositional bias: basic and acidic residues; the sequence is PKKEFTETPKDSE.

It belongs to the polyribonucleotide nucleotidyltransferase family. Requires Mg(2+) as cofactor.

The protein resides in the cytoplasm. The enzyme catalyses RNA(n+1) + phosphate = RNA(n) + a ribonucleoside 5'-diphosphate. Its function is as follows. Involved in mRNA degradation. Catalyzes the phosphorolysis of single-stranded polyribonucleotides processively in the 3'- to 5'-direction. This is Polyribonucleotide nucleotidyltransferase from Streptococcus pneumoniae (strain Taiwan19F-14).